Consider the following 800-residue polypeptide: Phenylalanine--tRNA ligase beta subunit (800 aa).

Positions 39–154 (TKEIKNLVVG…TEVKPGTDAL (116 aa)) constitute a tRNA-binding domain. The 76-residue stretch at 408-483 (CFVTPIDISV…RIYGYDKIPS (76 aa)) folds into the B5 domain. Mg(2+) contacts are provided by aspartate 461, aspartate 467, glutamate 470, and glutamate 471. In terms of domain architecture, FDX-ACB spans 708–800 (PRFPGVSRDI…ALKSEGATIR (93 aa)).

It belongs to the phenylalanyl-tRNA synthetase beta subunit family. Type 1 subfamily. Tetramer of two alpha and two beta subunits. The cofactor is Mg(2+).

The protein resides in the cytoplasm. It catalyses the reaction tRNA(Phe) + L-phenylalanine + ATP = L-phenylalanyl-tRNA(Phe) + AMP + diphosphate + H(+). The chain is Phenylalanine--tRNA ligase beta subunit from Staphylococcus saprophyticus subsp. saprophyticus (strain ATCC 15305 / DSM 20229 / NCIMB 8711 / NCTC 7292 / S-41).